A 127-amino-acid polypeptide reads, in one-letter code: uncharacterized protein (127 aa).

The next 4 membrane-spanning stretches (helical) occupy residues 1-21 (MYII…YILV), 32-52 (TVAA…LYVF), 68-88 (AFFS…IILV), and 100-120 (ILDN…LVFK).

The protein belongs to the GtrA family.

It localises to the cell membrane. This is an uncharacterized protein from Bacillus subtilis (strain 168).